The sequence spans 1131 residues: Filamin A-interacting protein 1-like (1131 aa).

A disordered region spans residues Met1–Thr62. The span at Val50–Thr62 shows a compositional bias: basic and acidic residues. Coiled coils occupy residues Asn139 to Val583 and Ser610 to Arg780. The residue at position 789 (Ser789) is a Phosphoserine. A phosphothreonine mark is found at Thr984 and Thr992. Residue Ser1050 is modified to Phosphoserine.

This sequence belongs to the FILIP1 family.

The protein resides in the cytoplasm. The protein localises to the membrane. Its subcellular location is the nucleus. In terms of biological role, acts as a regulator of the antiangiogenic activity on endothelial cells. When overexpressed in endothelial cells, leads to inhibition of cell proliferation and migration and an increase in apoptosis. Inhibits melanoma growth When expressed in tumor-associated vasculature. The sequence is that of Filamin A-interacting protein 1-like (Filip1l) from Mus musculus (Mouse).